The following is a 31-amino-acid chain: Cyclotide mech-5 (31 aa).

The cyclopeptide (Gly-Asp) cross-link spans 1-31 (GVIPCGESCVFIPCISSVVGCTCKNKVCYRD). 3 disulfide bridges follow: C5–C21, C9–C23, and C14–C28.

This is a cyclic peptide. Post-translationally, contains 3 disulfide bonds.

Functionally, probably participates in a plant defense mechanism (Potential). Binds to and induces leakage in phospholipd membranes, particularly ones containing 1-palmitoyl-2-oleophosphatidylethanolamine (POPE). The polypeptide is Cyclotide mech-5 (Melicytus chathamicus (Chatham Island mahoe)).